A 158-amino-acid polypeptide reads, in one-letter code: Large ribosomal subunit protein uL11 (158 aa).

It belongs to the universal ribosomal protein uL11 family. Part of the ribosomal stalk of the 50S ribosomal subunit. Interacts with L10 and the large rRNA to form the base of the stalk. L10 forms an elongated spine to which L12 dimers bind in a sequential fashion forming a multimeric L10(L12)X complex.

In terms of biological role, forms part of the ribosomal stalk which helps the ribosome interact with GTP-bound translation factors. The polypeptide is Large ribosomal subunit protein uL11 (Methanoculleus marisnigri (strain ATCC 35101 / DSM 1498 / JR1)).